Reading from the N-terminus, the 63-residue chain is Conotoxin Gm5.1 (63 aa).

An N-terminal signal peptide occupies residues 1–21; the sequence is MRYLPVFVILLLLIASIPSDT. Residues 22-50 constitute a propeptide that is removed on maturation; the sequence is VQLKTKDDMPLASFHGNGRRILRMLSNKR.

It belongs to the conotoxin T superfamily. Contains 2 disulfide bonds that can be either 'C1-C3, C2-C4' or 'C1-C4, C2-C3', since these disulfide connectivities have been observed for conotoxins with cysteine framework V (for examples, see AC P0DQQ7 and AC P81755). Expressed by the venom duct.

Its subcellular location is the secreted. In Conus gloriamaris (Glory-of-the-Sea cone), this protein is Conotoxin Gm5.1.